The chain runs to 154 residues: Myoglobin (154 aa).

One can recognise a Globin domain in the interval Gly-2–Lys-148. Ser-4 is subject to Phosphoserine. His-65 is a binding site for nitrite. His-65 contributes to the O2 binding site. Thr-68 carries the post-translational modification Phosphothreonine. His-94 provides a ligand contact to heme b.

It belongs to the globin family. As to quaternary structure, monomeric.

Its subcellular location is the cytoplasm. It is found in the sarcoplasm. The catalysed reaction is Fe(III)-heme b-[protein] + nitric oxide + H2O = Fe(II)-heme b-[protein] + nitrite + 2 H(+). It catalyses the reaction H2O2 + AH2 = A + 2 H2O. In terms of biological role, monomeric heme protein which primary function is to store oxygen and facilitate its diffusion within muscle tissues. Reversibly binds oxygen through a pentacoordinated heme iron and enables its timely and efficient release as needed during periods of heightened demand. Depending on the oxidative conditions of tissues and cells, and in addition to its ability to bind oxygen, it also has a nitrite reductase activity whereby it regulates the production of bioactive nitric oxide. Under stress conditions, like hypoxia and anoxia, it also protects cells against reactive oxygen species thanks to its pseudoperoxidase activity. This Sciurus vulgaris (Eurasian red squirrel) protein is Myoglobin (MB).